A 266-amino-acid chain; its full sequence is Glucosamine-6-phosphate deaminase (266 aa).

Asp72 (proton acceptor; for enolization step) is an active-site residue. Asp141 acts as the For ring-opening step in catalysis. His143 (proton acceptor; for ring-opening step) is an active-site residue. Glu148 serves as the catalytic For ring-opening step.

This sequence belongs to the glucosamine/galactosamine-6-phosphate isomerase family. NagB subfamily. As to quaternary structure, homohexamer; trimer of disulfide-linked dimers.

The catalysed reaction is alpha-D-glucosamine 6-phosphate + H2O = beta-D-fructose 6-phosphate + NH4(+). The protein operates within amino-sugar metabolism; N-acetylneuraminate degradation; D-fructose 6-phosphate from N-acetylneuraminate: step 5/5. Allosterically activated by N-acetylglucosamine 6-phosphate (GlcNAc6P). In terms of biological role, catalyzes the reversible isomerization-deamination of glucosamine 6-phosphate (GlcN6P) to form fructose 6-phosphate (Fru6P) and ammonium ion. The polypeptide is Glucosamine-6-phosphate deaminase (Vibrio parahaemolyticus serotype O3:K6 (strain RIMD 2210633)).